A 256-amino-acid chain; its full sequence is CCAAT/enhancer-binding protein delta (256 aa).

Serine 2 is modified (N-acetylserine). Disordered stretches follow at residues 18 to 40 (TAEP…AEPA), 92 to 121 (GGPA…APGS), and 139 to 206 (AAAQ…NQEM). Lysine 108 is covalently cross-linked (Glycyl lysine isopeptide (Lys-Gly) (interchain with G-Cter in SUMO)). The segment covering 143–162 (PTPPASPEPPRRSPAPPAPG) has biased composition (pro residues). Residues 164-188 (ARDKAAGKRGPDRGSPEYRQRRERN) show a composition bias toward basic and acidic residues. The 64-residue stretch at 178–241 (SPEYRQRRER…AGLRRFFKQL (64 aa)) folds into the bZIP domain. The interval 182-209 (RQRRERNNIAVRKSRDKAKRRNQEMQQK) is basic motif. The tract at residues 213–241 (LSAENEKLQQRVEQLTRDLAGLRRFFKQL) is leucine-zipper.

The protein belongs to the bZIP family. C/EBP subfamily. As to quaternary structure, binds DNA as a homodimer and as a heterodimer. Can form stable heterodimers with CEBPB. Can form stable heterodimers with CEBPA and CEBPE. Directly interacts with SPI1/PU.1; this interaction does not affect DNA-binding properties of each partner. Interacts with PRDM16.

It is found in the nucleus. In terms of biological role, transcription activator that recognizes two different DNA motifs: the CCAAT homology common to many promoters and the enhanced core homology common to many enhancers. Important transcription factor regulating the expression of genes involved in immune and inflammatory responses. Transcriptional activator that enhances IL6 transcription alone and as heterodimer with CEBPB. This Bos taurus (Bovine) protein is CCAAT/enhancer-binding protein delta (CEBPD).